The following is a 472-amino-acid chain: Aspartyl/glutamyl-tRNA(Asn/Gln) amidotransferase subunit B (472 aa).

It belongs to the GatB/GatE family. GatB subfamily. As to quaternary structure, heterotrimer of A, B and C subunits.

The catalysed reaction is L-glutamyl-tRNA(Gln) + L-glutamine + ATP + H2O = L-glutaminyl-tRNA(Gln) + L-glutamate + ADP + phosphate + H(+). It catalyses the reaction L-aspartyl-tRNA(Asn) + L-glutamine + ATP + H2O = L-asparaginyl-tRNA(Asn) + L-glutamate + ADP + phosphate + 2 H(+). Its function is as follows. Allows the formation of correctly charged Asn-tRNA(Asn) or Gln-tRNA(Gln) through the transamidation of misacylated Asp-tRNA(Asn) or Glu-tRNA(Gln) in organisms which lack either or both of asparaginyl-tRNA or glutaminyl-tRNA synthetases. The reaction takes place in the presence of glutamine and ATP through an activated phospho-Asp-tRNA(Asn) or phospho-Glu-tRNA(Gln). In Campylobacter jejuni subsp. doylei (strain ATCC BAA-1458 / RM4099 / 269.97), this protein is Aspartyl/glutamyl-tRNA(Asn/Gln) amidotransferase subunit B.